We begin with the raw amino-acid sequence, 256 residues long: Ribonuclease 3 (256 aa).

Positions 6–128 constitute an RNase III domain; it reads LATLETRLDH…LFGAVFLDAG (123 aa). Glu41 contributes to the Mg(2+) binding site. Asp45 is an active-site residue. Asp114 and Glu117 together coordinate Mg(2+). Glu117 is a catalytic residue. Residues 155 to 225 form the DRBM domain; the sequence is DAKTLLQEFL…AKVALEAAQA (71 aa).

It belongs to the ribonuclease III family. As to quaternary structure, homodimer. The cofactor is Mg(2+).

It localises to the cytoplasm. It carries out the reaction Endonucleolytic cleavage to 5'-phosphomonoester.. Functionally, digests double-stranded RNA. Involved in the processing of primary rRNA transcript to yield the immediate precursors to the large and small rRNAs (23S and 16S). Processes some mRNAs, and tRNAs when they are encoded in the rRNA operon. Processes pre-crRNA and tracrRNA of type II CRISPR loci if present in the organism. This Bordetella bronchiseptica (strain ATCC BAA-588 / NCTC 13252 / RB50) (Alcaligenes bronchisepticus) protein is Ribonuclease 3.